Reading from the N-terminus, the 114-residue chain is Iron-sulfur cluster insertion protein ErpA (114 aa).

Residues Cys-42, Cys-106, and Cys-108 each contribute to the iron-sulfur cluster site.

This sequence belongs to the HesB/IscA family. In terms of assembly, homodimer. Iron-sulfur cluster serves as cofactor.

Required for insertion of 4Fe-4S clusters for at least IspG. The sequence is that of Iron-sulfur cluster insertion protein ErpA from Erwinia tasmaniensis (strain DSM 17950 / CFBP 7177 / CIP 109463 / NCPPB 4357 / Et1/99).